Here is a 150-residue protein sequence, read N- to C-terminus: Cell division protein SepF (150 aa).

Belongs to the SepF family. Homodimer. Interacts with FtsZ.

It localises to the cytoplasm. Cell division protein that is part of the divisome complex and is recruited early to the Z-ring. Probably stimulates Z-ring formation, perhaps through the cross-linking of FtsZ protofilaments. Its function overlaps with FtsA. The chain is Cell division protein SepF from Clostridium botulinum (strain ATCC 19397 / Type A).